The chain runs to 97 residues: Acylphosphatase (97 aa).

Residues 11–97 (TYYVRVRGTV…EKRYERFEQH (87 aa)) enclose the Acylphosphatase-like domain. Catalysis depends on residues Arg-26 and Asn-44. Residues 76-97 (RVTEVSGEERSTEKRYERFEQH) form a disordered region. Over residues 82 to 97 (GEERSTEKRYERFEQH) the composition is skewed to basic and acidic residues.

It belongs to the acylphosphatase family.

It carries out the reaction an acyl phosphate + H2O = a carboxylate + phosphate + H(+). This chain is Acylphosphatase (acyP), found in Paraburkholderia xenovorans (strain LB400).